We begin with the raw amino-acid sequence, 660 residues long: MKTVVFAYHDMGCLGIEALLAAGYEISAIFTHTDNPGEKAFYGSVAHLAAERGIPVYAPDNVNHPLWVERIAQLSPEVIFSFYYRHLICDEILQLAPAGAFNLHGSLLPKYRGRAPLNWVLVNGETETGVTLHRMVKRADAGAIVAQLRVAIAPDDIAITLHHKLCHATRQLLEQTLPAIKHGNILEIAQRENEATCFGRRTPDDSFLEWHKPASVLHNMVRAVADPWPGAFSYVGNQKFTVWSSRVHPHASKAQPGSVISIAPLLIACGDGALEIVTGQAGDGITMQGSQLAQTLGLVQGSRLNSQPACTARRRTRVLILGVNGFIGNHLTERLLREDHYEVYGLDIGSDAISRFLNHPHFHFVEGDISIHSEWIEYHVKKCDVVLPLVAIATPIEYTRNPLRVFELDFEENLRIIRYCVKYRKRIIFPSTSEVYGMCSDKYFDEDHSNLIVGPVNKPRWIYSVSKQLLDRVIWAYGEKEGLQFTLFRPFNWMGPRLDNLNAARIGSSRAITQLILNLVEGSPIKLIDGGKQKRCFTDIRDGIEALYRIIENAGNRCDGEIINIGNPENEASIEELGEMLLASFEKHPLRHHFPPFAGFRVVESSSYYGKGYQDVEHRKPSIRNAHRCLDWEPKIDMQETIDETLDFFLRTVDLTDKPS.

Residues 1 to 304 form a formyltransferase ArnAFT region; sequence MKTVVFAYHD…TLGLVQGSRL (304 aa). 86–88 contacts (6R)-10-formyltetrahydrofolate; sequence HLI. The active-site Proton donor; for formyltransferase activity is the H104. Residues R114 and 136 to 140 contribute to the (6R)-10-formyltetrahydrofolate site; that span reads VKRAD. The interval 314–660 is dehydrogenase ArnADH; that stretch reads RRTRVLILGV…RTVDLTDKPS (347 aa). NAD(+)-binding positions include D347 and 368-369; that span reads DI. UDP-alpha-D-glucuronate is bound by residues A393, Y398, and 432-433; that span reads TS. E434 acts as the Proton acceptor; for decarboxylase activity in catalysis. UDP-alpha-D-glucuronate-binding positions include R460, N492, 526 to 535, and Y613; that span reads KLIDGGKQKR. R619 (proton donor; for decarboxylase activity) is an active-site residue.

In the N-terminal section; belongs to the Fmt family. UDP-L-Ara4N formyltransferase subfamily. It in the C-terminal section; belongs to the NAD(P)-dependent epimerase/dehydratase family. UDP-glucuronic acid decarboxylase subfamily. In terms of assembly, homohexamer, formed by a dimer of trimers.

The enzyme catalyses UDP-alpha-D-glucuronate + NAD(+) = UDP-beta-L-threo-pentopyranos-4-ulose + CO2 + NADH. It catalyses the reaction UDP-4-amino-4-deoxy-beta-L-arabinose + (6R)-10-formyltetrahydrofolate = UDP-4-deoxy-4-formamido-beta-L-arabinose + (6S)-5,6,7,8-tetrahydrofolate + H(+). It participates in nucleotide-sugar biosynthesis; UDP-4-deoxy-4-formamido-beta-L-arabinose biosynthesis; UDP-4-deoxy-4-formamido-beta-L-arabinose from UDP-alpha-D-glucuronate: step 1/3. Its pathway is nucleotide-sugar biosynthesis; UDP-4-deoxy-4-formamido-beta-L-arabinose biosynthesis; UDP-4-deoxy-4-formamido-beta-L-arabinose from UDP-alpha-D-glucuronate: step 3/3. It functions in the pathway bacterial outer membrane biogenesis; lipopolysaccharide biosynthesis. Functionally, bifunctional enzyme that catalyzes the oxidative decarboxylation of UDP-glucuronic acid (UDP-GlcUA) to UDP-4-keto-arabinose (UDP-Ara4O) and the addition of a formyl group to UDP-4-amino-4-deoxy-L-arabinose (UDP-L-Ara4N) to form UDP-L-4-formamido-arabinose (UDP-L-Ara4FN). The modified arabinose is attached to lipid A and is required for resistance to polymyxin and cationic antimicrobial peptides. This chain is Bifunctional polymyxin resistance protein ArnA, found in Shigella boydii serotype 4 (strain Sb227).